The chain runs to 261 residues: Transcription antitermination protein NusB (261 aa).

Positions 168–261 (ARVEDQPSDD…DLHKKDTTDD (94 aa)) are disordered. The span at 217 to 228 (VDTTSGNASDPE) shows a compositional bias: polar residues. Residues 242 to 261 (PTSKDHELATDLHKKDTTDD) show a composition bias toward basic and acidic residues.

Belongs to the NusB family.

In terms of biological role, involved in transcription antitermination. Required for transcription of ribosomal RNA (rRNA) genes. Binds specifically to the boxA antiterminator sequence of the ribosomal RNA (rrn) operons. The sequence is that of Transcription antitermination protein NusB from Cutibacterium acnes (strain DSM 16379 / KPA171202) (Propionibacterium acnes).